Here is a 220-residue protein sequence, read N- to C-terminus: Protein-methionine-sulfoxide reductase heme-binding subunit MsrQ (220 aa).

6 helical membrane-spanning segments follow: residues 20-40, 52-72, 86-106, 122-142, 153-173, and 175-195; these read LWLL…LGAT, EHLL…VTPI, ALGL…MVLD, PFIT…LTSN, WSSL…HFLM, and VKSW…LLLW.

The protein belongs to the MsrQ family. In terms of assembly, heterodimer of a catalytic subunit (MsrP) and a heme-binding subunit (MsrQ). The cofactor is FMN. Heme b serves as cofactor.

The protein resides in the cell inner membrane. Functionally, part of the MsrPQ system that repairs oxidized periplasmic proteins containing methionine sulfoxide residues (Met-O), using respiratory chain electrons. Thus protects these proteins from oxidative-stress damage caused by reactive species of oxygen and chlorine generated by the host defense mechanisms. MsrPQ is essential for the maintenance of envelope integrity under bleach stress, rescuing a wide series of structurally unrelated periplasmic proteins from methionine oxidation. MsrQ provides electrons for reduction to the reductase catalytic subunit MsrP, using the quinone pool of the respiratory chain. The chain is Protein-methionine-sulfoxide reductase heme-binding subunit MsrQ from Brucella abortus (strain S19).